A 440-amino-acid chain; its full sequence is WAS/WASL-interacting protein family member 2 (440 aa).

Positions 1 to 18 are enriched in pro residues; sequence MPIPPPPPPPPGPPPPPT. Residues 1–36 are disordered; that stretch reads MPIPPPPPPPPGPPPPPTFHQANTEQPKLSRDEQRG. The 18-residue stretch at 36–53 folds into the WH2 domain; sequence GRGALLQDICKGTKLKKV. Arg37 is subject to Asymmetric dimethylarginine. Residues 49–52 form a binds actin region; it reads KLKK. 2 disordered regions span residues 56 to 387 and 419 to 440; these read INDR…DSIT and RIYP…PILR. Low complexity predominate over residues 116 to 133; the sequence is PSSRAAAPRPPVSAASGR. The segment covering 161 to 172 has biased composition (polar residues); that stretch reads RPNTTSSTGMKH. 4 stretches are compositionally biased toward pro residues: residues 176–193, 222–236, 249–262, and 356–378; these read APPP…PTPL, EGPP…PPSP, APPP…PGVP, and RGKP…PPPL.

The protein belongs to the verprolin family. In terms of assembly, interacts with WASL and WASP, and this interaction results in cytoplasmic relocation of these two proteins along actin filaments. Interacts with NCK2 resulting in the localization to sites of focal adhesions. No interaction was seen with WASF2 and WASF3. In terms of tissue distribution, expressed mainly in brain, colon, lung and stomach (at protein level). Ubiquitously expressed, with high expression in brain, kidney, lung, and placenta.

The protein localises to the cytoplasm. It is found in the cytoskeleton. In terms of biological role, plays an active role in the formation of cell surface protrusions downstream of activated PDGFB receptors. Plays an important role in actin-microspike formation through cooperation with WASL. May cooperate with WASP and WASL to induce mobilization and reorganization of the actin filament system. This chain is WAS/WASL-interacting protein family member 2 (WIPF2), found in Homo sapiens (Human).